The chain runs to 427 residues: MTESCTVFSFSGPKGIPDYFPPDSAQFVAVRDGLLTAARRAGYGDIELPVFEDTALFARGVGESTDVVAKEMYTFADRGDRSVTLRPEGTAGVVRAVIEHGLDRGALPVKLCYAGPFFRYERPQAGRCRQLQQVGVEAIGVDDPALDAEVITIADAGFRSLGLDGFQLEITSLGDGTCRPQYRKLLQEFLLQLDLDEDTRRRAELNPLRVLDDKRPQVQAMTAAAPVLLDHLSDGAKQHFDTVLAHLDALRVPYVINPRMVRGLDYYTKTTFEFVHPGLGAQSGIGGGGRYDGLMRQLGGQDLSGIGFGLGVDRTLLALHAEGKTVGETTRCDVFGVSLGEAAKLKVAMLAGQLRAAGVRVDLIYGDRGIRGAMRAAGRSGARIALIVDDCAIKADGVGVRDLATGEQISVAVDSVVAEVISRIAPS.

The protein belongs to the class-II aminoacyl-tRNA synthetase family. In terms of assembly, homodimer.

The protein resides in the cytoplasm. The catalysed reaction is tRNA(His) + L-histidine + ATP = L-histidyl-tRNA(His) + AMP + diphosphate + H(+). This chain is Histidine--tRNA ligase (hisS), found in Mycobacterium leprae (strain TN).